We begin with the raw amino-acid sequence, 433 residues long: Serine/threonine-protein kinase STK11 (433 aa).

S31 carries the post-translational modification Phosphoserine. Residues K44 and K48 each carry the N6-acetyllysine modification. Residues 45–90 form a sufficient for interaction with SIRT1 region; that stretch reads LIGKYLMGDLLGEGSYGKVKEVLDSETLCRRAVKILKKKKLRRIPN. The 261-residue stretch at 49 to 309 folds into the Protein kinase domain; sequence YLMGDLLGEG…IRQIRQHSWF (261 aa). Residues 55–63 and K78 each bind ATP; that span reads LGEGSYGKV. N6-acetyllysine occurs at positions 96 and 97. D176 acts as the Proton acceptor in catalysis. A Phosphothreonine; by autocatalysis modification is found at T189. An N6-acetyllysine mark is found at K296 and K311. The disordered stretch occupies residues 312 to 331; sequence KHPPAEAPVPIPPSPDTKDR. Over residues 316–326 the composition is skewed to pro residues; that stretch reads AEAPVPIPPSP. S325 carries the post-translational modification Phosphoserine. At T336 the chain carries Phosphothreonine; by autocatalysis. T363 is modified (phosphothreonine; by ATM and autocatalysis). The interval 397-433 is disordered; it reads AAQLSTKSRAEGRAPNPARKACSASSKIRRLSACKQQ. Phosphoserine is present on residues Q399 and S401. K416 is subject to N6-acetyllysine. C418 carries the S-palmitoyl cysteine lipid modification. The residue at position 423 (K423) is an N6-acetyllysine. Residues 423–433 are compositionally biased toward basic residues; the sequence is KIRRLSACKQQ. S428 is modified (phosphoserine; by autocatalysis, PKA, PKC/PRKCZ and RPS6KA1). Position 430 is a cysteine methyl ester (C430). The S-farnesyl cysteine moiety is linked to residue C430. K431 bears the N6-acetyllysine mark. Positions 431–433 are cleaved as a propeptide — removed in mature form; the sequence is KQQ.

It belongs to the protein kinase superfamily. CAMK Ser/Thr protein kinase family. LKB1 subfamily. Catalytic component of a trimeric complex composed of STK11/LKB1, STRAD (STRADA or STRADB) and CAB39/MO25 (CAB39/MO25alpha or CAB39L/MO25beta): the complex tethers STK11/LKB1 in the cytoplasm and stimulates its catalytic activity. Found in a ternary complex composed of SMAD4, STK11/LKB1 and STK11IP. Interacts with p53/TP53, SMAD4, STK11IP and WDR6. Interacts with NR4A1. Interacts with NISCH; this interaction may increase STK11 activity. Interacts with PTEN; leading to PTEN phosphorylation. Interacts with SIRT1; the interaction deacetylates STK11. Interacts with CDKN1A. Mg(2+) is required as a cofactor. Requires Mn(2+) as cofactor. Post-translationally, phosphorylated by ATM at Thr-363 following ionizing radiation (IR). Phosphorylation at Ser-428 by RPS6KA1 and/or some PKA is required to inhibit cell growth. Phosphorylation at Ser-428 is also required during neuronal polarization to mediate phosphorylation of BRSK1 and BRSK2. Phosphorylation by PKC/PRKCZ at Ser-399 in isoform 2 promotes metformin (or peroxynitrite)-induced nuclear export of STK11 and activation of AMPK. UV radiation-induced phosphorylation at Thr-363 mediates CDKN1A degradation. In terms of processing, acetylated. Deacetylation at Lys-48 enhances cytoplasmic localization and kinase activity in vitro. In terms of tissue distribution, ubiquitously expressed. Strongest expression in testis and fetal liver.

It is found in the nucleus. The protein localises to the cytoplasm. It localises to the membrane. The protein resides in the mitochondrion. It carries out the reaction L-seryl-[protein] + ATP = O-phospho-L-seryl-[protein] + ADP + H(+). The enzyme catalyses L-threonyl-[protein] + ATP = O-phospho-L-threonyl-[protein] + ADP + H(+). Its activity is regulated as follows. Activated by forming a complex with STRAD (STRADA or STRADB) and CAB39/MO25 (CAB39/MO25alpha or CAB39L/MO25beta): STRADA (or STRADB)-binding promotes a conformational change of STK11/LKB1 in an active conformation, which is stabilized by CAB39/MO25alpha (or CAB39L/MO25beta) interacting with the STK11/LKB1 activation loop. Sequestration in the nucleus by NR4A1 prevents it from phosphorylating and activating cytoplasmic AMPK. In terms of biological role, tumor suppressor serine/threonine-protein kinase that controls the activity of AMP-activated protein kinase (AMPK) family members, thereby playing a role in various processes such as cell metabolism, cell polarity, apoptosis and DNA damage response. Acts by phosphorylating the T-loop of AMPK family proteins, thus promoting their activity: phosphorylates PRKAA1, PRKAA2, BRSK1, BRSK2, MARK1, MARK2, MARK3, MARK4, NUAK1, NUAK2, SIK1, SIK2, SIK3 and SNRK but not MELK. Also phosphorylates non-AMPK family proteins such as STRADA, PTEN and possibly p53/TP53. Acts as a key upstream regulator of AMPK by mediating phosphorylation and activation of AMPK catalytic subunits PRKAA1 and PRKAA2 and thereby regulates processes including: inhibition of signaling pathways that promote cell growth and proliferation when energy levels are low, glucose homeostasis in liver, activation of autophagy when cells undergo nutrient deprivation, and B-cell differentiation in the germinal center in response to DNA damage. Also acts as a regulator of cellular polarity by remodeling the actin cytoskeleton. Required for cortical neuron polarization by mediating phosphorylation and activation of BRSK1 and BRSK2, leading to axon initiation and specification. Involved in DNA damage response: interacts with p53/TP53 and recruited to the CDKN1A/WAF1 promoter to participate in transcription activation. Able to phosphorylate p53/TP53; the relevance of such result in vivo is however unclear and phosphorylation may be indirect and mediated by downstream STK11/LKB1 kinase NUAK1. Also acts as a mediator of p53/TP53-dependent apoptosis via interaction with p53/TP53: translocates to the mitochondrion during apoptosis and regulates p53/TP53-dependent apoptosis pathways. Regulates UV radiation-induced DNA damage response mediated by CDKN1A. In association with NUAK1, phosphorylates CDKN1A in response to UV radiation and contributes to its degradation which is necessary for optimal DNA repair. Has a role in spermiogenesis. The sequence is that of Serine/threonine-protein kinase STK11 from Homo sapiens (Human).